Here is a 149-residue protein sequence, read N- to C-terminus: NADH-quinone oxidoreductase subunit I 1 (149 aa).

4Fe-4S ferredoxin-type domains lie at L51–T82 and T93–E122. Residues C62, C65, C68, C72, C102, C105, C108, and C112 each coordinate [4Fe-4S] cluster.

It belongs to the complex I 23 kDa subunit family. In terms of assembly, NDH-1 is composed of 14 different subunits. Subunits NuoA, H, J, K, L, M, N constitute the membrane sector of the complex. [4Fe-4S] cluster serves as cofactor.

The protein resides in the cell inner membrane. It catalyses the reaction a quinone + NADH + 5 H(+)(in) = a quinol + NAD(+) + 4 H(+)(out). Functionally, NDH-1 shuttles electrons from NADH, via FMN and iron-sulfur (Fe-S) centers, to quinones in the respiratory chain. The immediate electron acceptor for the enzyme in this species is believed to be ubiquinone. Couples the redox reaction to proton translocation (for every two electrons transferred, four hydrogen ions are translocated across the cytoplasmic membrane), and thus conserves the redox energy in a proton gradient. In Syntrophobacter fumaroxidans (strain DSM 10017 / MPOB), this protein is NADH-quinone oxidoreductase subunit I 1.